The chain runs to 511 residues: Spermatogenesis-associated protein 2 (511 aa).

A PUB domain is found at 77–149; that stretch reads ALHCAFSMLE…AYKLKELVES (73 aa). Positions 320-337 match the PIM motif motif; the sequence is TYFPTQDDVDLYTDSEPR.

This sequence belongs to the SPATA2 family. As to quaternary structure, interacts (via the PIM motif) with RNF31/HOIP (via the PUB domain); the interaction is direct. Interacts (via the PUB domain) with CYLD; the interaction is direct. In terms of tissue distribution, expressed in the testis and to a lesser extent in the brain, while skeletal muscle and kidney show weak expression.

The protein localises to the cytoplasm. The protein resides in the nucleus. Its function is as follows. Bridging factor that mediates the recruitment of CYLD to the LUBAC complex, thereby regulating TNF-alpha-induced necroptosis. Acts as a direct binding intermediate that bridges RNF31/HOIP, the catalytic subunit of the LUBAC complex, and the deubiquitinase (CYLD), thereby recruiting CYLD to the TNF-R1 signaling complex (TNF-RSC). Required to activate the 'Met-1'- (linear) and 'Lys-63'-linked deubiquitinase activities of CYLD. Controls the kinase activity of RIPK1 and TNF-alpha-induced necroptosis by promoting 'Met-1'-linked deubiquitination of RIPK1 by CYLD. The sequence is that of Spermatogenesis-associated protein 2 from Rattus norvegicus (Rat).